Here is a 472-residue protein sequence, read N- to C-terminus: MGLLLRSALFKYIIIVLIMLNLRGYVLAEQEQGSQIPLEEIIQVGVTRNKIMTAQYECYQKIMQEPANGKEGHFCNRTWDGWLCWGDVSAGVISEQRCPDYFQDFDPSEKVTKECGKNGHWFRHPDSNRTWTNYTRCNTFTHEKVKTALNLYYLTIIGHGLSIASLLISLGIFFYFKNLSCQRITLHKNLFFSFVCNSIITIISLSAVANNQALVATNPVSCKISQFIHLYLMGCNYFWMLCEGIYLHTLIVVAVFAEKQHLMWYYLLGWGFPLIPACIHAVARSLYYNDNCWISSETHLLYIIHGPICAALLVNLFFLLNIVRVLITKLKVTHQAESNLYMKAVRATLILVPLLGIEFVLFPWKPEGRIAEEIYDYVMHILMHYQGLLVATIFCFFNGEVQAVLKRHWNQYKIQFGSSFAHSEGLRSASYTVSSISEIQGTTYTHDYSEQSNGKNCHDMENVFFKTEKQYM.

A signal peptide spans 1–28 (MGLLLRSALFKYIIIVLIMLNLRGYVLA). At 29–149 (EQEQGSQIPL…FTHEKVKTAL (121 aa)) the chain is on the extracellular side. Cystine bridges form between cysteine 58–cysteine 84, cysteine 75–cysteine 115, and cysteine 98–cysteine 137. Residues asparagine 76, asparagine 128, and asparagine 133 are each glycosylated (N-linked (GlcNAc...) asparagine). Residues 150–174 (NLYYLTIIGHGLSIASLLISLGIFF) form a helical membrane-spanning segment. Topologically, residues 175 to 185 (YFKNLSCQRIT) are cytoplasmic. A helical transmembrane segment spans residues 186 to 208 (LHKNLFFSFVCNSIITIISLSAV). Topologically, residues 209–219 (ANNQALVATNP) are extracellular. A helical membrane pass occupies residues 220-248 (VSCKISQFIHLYLMGCNYFWMLCEGIYLH). Topologically, residues 249 to 262 (TLIVVAVFAEKQHL) are cytoplasmic. A helical transmembrane segment spans residues 263 to 283 (MWYYLLGWGFPLIPACIHAVA). The Extracellular segment spans residues 284–299 (RSLYYNDNCWISSETH). Residues 300-324 (LLYIIHGPICAALLVNLFFLLNIVR) form a helical membrane-spanning segment. The Cytoplasmic portion of the chain corresponds to 325–339 (VLITKLKVTHQAESN). A helical transmembrane segment spans residues 340–361 (LYMKAVRATLILVPLLGIEFVL). The Extracellular portion of the chain corresponds to 362 to 376 (FPWKPEGRIAEEIYD). The chain crosses the membrane as a helical span at residues 377–397 (YVMHILMHYQGLLVATIFCFF). The Cytoplasmic segment spans residues 398–472 (NGEVQAVLKR…VFFKTEKQYM (75 aa)).

This sequence belongs to the G-protein coupled receptor 2 family.

It is found in the cell membrane. Its function is as follows. May function as G protein-coupled receptor for calcitonin-gene-related peptides and adrenomedullin. Specificity may be modulated by accessory proteins. May activate cAMP-dependent pathway. This Xenopus tropicalis (Western clawed frog) protein is Calcitonin gene-related peptide type 1 receptor (calcrl).